Consider the following 272-residue polypeptide: Elongation factor Ts (272 aa).

Residues T76–V79 form an involved in Mg(2+) ion dislocation from EF-Tu region.

The protein belongs to the EF-Ts family.

The protein localises to the cytoplasm. Associates with the EF-Tu.GDP complex and induces the exchange of GDP to GTP. It remains bound to the aminoacyl-tRNA.EF-Tu.GTP complex up to the GTP hydrolysis stage on the ribosome. In Corynebacterium urealyticum (strain ATCC 43042 / DSM 7109), this protein is Elongation factor Ts.